Consider the following 301-residue polypeptide: UDP-N-acetylenolpyruvoylglucosamine reductase 1 (301 aa).

Residues 29 to 196 (KIGGPADILI…LEAEFQLQIG (168 aa)) form the FAD-binding PCMH-type domain. R174 is a catalytic residue. S225 acts as the Proton donor in catalysis. Residue E295 is part of the active site.

It belongs to the MurB family. FAD is required as a cofactor.

The protein localises to the cytoplasm. The enzyme catalyses UDP-N-acetyl-alpha-D-muramate + NADP(+) = UDP-N-acetyl-3-O-(1-carboxyvinyl)-alpha-D-glucosamine + NADPH + H(+). It functions in the pathway cell wall biogenesis; peptidoglycan biosynthesis. Cell wall formation. In Bacillus cereus (strain ZK / E33L), this protein is UDP-N-acetylenolpyruvoylglucosamine reductase 1.